Reading from the N-terminus, the 144-residue chain is 3-dehydroquinate dehydratase (144 aa).

Tyr23 acts as the Proton acceptor in catalysis. Positions 74, 80, and 87 each coordinate substrate. His100 (proton donor) is an active-site residue. Residues 101–102 (LS) and Arg111 contribute to the substrate site.

It belongs to the type-II 3-dehydroquinase family. Homododecamer.

The enzyme catalyses 3-dehydroquinate = 3-dehydroshikimate + H2O. The protein operates within metabolic intermediate biosynthesis; chorismate biosynthesis; chorismate from D-erythrose 4-phosphate and phosphoenolpyruvate: step 3/7. In terms of biological role, catalyzes a trans-dehydration via an enolate intermediate. The chain is 3-dehydroquinate dehydratase from Hydrogenovibrio crunogenus (strain DSM 25203 / XCL-2) (Thiomicrospira crunogena).